Here is a 747-residue protein sequence, read N- to C-terminus: Mitochondrial inner membrane i-AAA protease supercomplex subunit YME1 (747 aa).

Basic and acidic residues predominate over residues K51–S64. The disordered stretch occupies residues K51–T92. Residues G66–S80 are compositionally biased toward polar residues. G321–T328 is a binding site for ATP. H540 contacts Zn(2+). E541 is an active-site residue. Residues H544 and D618 each contribute to the Zn(2+) site. The disordered stretch occupies residues S718–A747. A compositionally biased stretch (basic and acidic residues) spans S728–K740.

In the N-terminal section; belongs to the AAA ATPase family. This sequence in the C-terminal section; belongs to the peptidase M41 family. In terms of assembly, component of the mitochondrial inner membrane i-AAA protease supercomplex composed of MGR1, MGR3 and YME1. Interacts directly with MGR1. Requires Zn(2+) as cofactor.

The protein localises to the mitochondrion inner membrane. In terms of biological role, catalytic subunit of the mitochondrial inner membrane i-AAA protease supercomplex required for mitochondrial inner membrane protein turnover. The protease is probably ATP-dependent. Important to maintain the integrity of the mitochondrial compartment. Required both for the degradation of unassembled subunit 2 of cytochrome c oxidase (COX2) and for efficient assembly of mitochondrial respiratory chain. Binds unfolded substrates in an ATPase-independent manner; binding of folded COX2, a physiological substrate, requires an active ATPase but when COX2 is destabilized an active ATPase is no longer necessary. May process ATG32. In Saccharomyces cerevisiae (strain ATCC 204508 / S288c) (Baker's yeast), this protein is Mitochondrial inner membrane i-AAA protease supercomplex subunit YME1 (YME1).